Reading from the N-terminus, the 573-residue chain is 60 kDa heat shock protein, mitochondrial (573 aa).

Residues 1-26 (MLRLPAVLRQIRPVSRALAPHLTRAY) constitute a mitochondrion transit peptide. Residues lysine 75 and 111 to 115 (DGTTT) contribute to the ATP site. Tyrosine 227 is modified (phosphotyrosine). Glycine 440 and aspartate 520 together coordinate ATP.

It localises to the mitochondrion matrix. The catalysed reaction is ATP + H2O + a folded polypeptide = ADP + phosphate + an unfolded polypeptide.. Functionally, chaperonin implicated in mitochondrial protein import and macromolecular assembly. Together with Hsp10, facilitates the correct folding of imported proteins. May also prevent misfolding and promote the refolding and proper assembly of unfolded polypeptides generated under stress conditions in the mitochondrial matrix. The functional units of these chaperonins consist of heptameric rings of the large subunit Hsp60, which function as a back-to-back double ring. In a cyclic reaction, Hsp60 ring complexes bind one unfolded substrate protein per ring, followed by the binding of ATP and association with 2 heptameric rings of the co-chaperonin Hsp10. This leads to sequestration of the substrate protein in the inner cavity of Hsp60 where, for a certain period of time, it can fold undisturbed by other cell components. Synchronous hydrolysis of ATP in all Hsp60 subunits results in the dissociation of the chaperonin rings and the release of ADP and the folded substrate protein. The sequence is that of 60 kDa heat shock protein, mitochondrial from Gallus gallus (Chicken).